Consider the following 168-residue polypeptide: UPF0262 protein BRADO6636 (168 aa).

It belongs to the UPF0262 family.

The sequence is that of UPF0262 protein BRADO6636 from Bradyrhizobium sp. (strain ORS 278).